The chain runs to 432 residues: Trigger factor (432 aa).

One can recognise a PPIase FKBP-type domain in the interval 161-246 (EDRVTIDFTG…LKKVEERELP (86 aa)).

It belongs to the FKBP-type PPIase family. Tig subfamily. Homodimer and monomer. In vivo most of the ribosomes are in complex with monomeric TF. Uncomplexed TF, however, is in a monomer-dimer equilibrium with approximately two thirds of TF existing in a dimeric state.

Its subcellular location is the cytoplasm. It carries out the reaction [protein]-peptidylproline (omega=180) = [protein]-peptidylproline (omega=0). Involved in protein export. Acts as a chaperone by maintaining the newly synthesized protein in an open conformation. Functions as a peptidyl-prolyl cis-trans isomerase. This is Trigger factor from Escherichia fergusonii (strain ATCC 35469 / DSM 13698 / CCUG 18766 / IAM 14443 / JCM 21226 / LMG 7866 / NBRC 102419 / NCTC 12128 / CDC 0568-73).